A 457-amino-acid polypeptide reads, in one-letter code: tRNA modification GTPase MnmE (457 aa).

(6S)-5-formyl-5,6,7,8-tetrahydrofolate is bound by residues Arg22, Glu83, and Arg122. The 160-residue stretch at 219 to 378 (GLATAIIGRP…LEEAIKALFF (160 aa)) folds into the TrmE-type G domain. Asn229 provides a ligand contact to K(+). GTP is bound by residues 229-234 (NVGKSS), 248-254 (TDIAGTT), and 273-276 (DTAG). Position 233 (Ser233) interacts with Mg(2+). 3 residues coordinate K(+): Thr248, Ile250, and Thr253. Mg(2+) is bound at residue Thr254. (6S)-5-formyl-5,6,7,8-tetrahydrofolate is bound at residue Lys457.

It belongs to the TRAFAC class TrmE-Era-EngA-EngB-Septin-like GTPase superfamily. TrmE GTPase family. In terms of assembly, homodimer. Heterotetramer of two MnmE and two MnmG subunits. K(+) is required as a cofactor.

It localises to the cytoplasm. In terms of biological role, exhibits a very high intrinsic GTPase hydrolysis rate. Involved in the addition of a carboxymethylaminomethyl (cmnm) group at the wobble position (U34) of certain tRNAs, forming tRNA-cmnm(5)s(2)U34. The sequence is that of tRNA modification GTPase MnmE from Listeria innocua serovar 6a (strain ATCC BAA-680 / CLIP 11262).